The chain runs to 440 residues: Exosome complex component RRP45 (440 aa).

The residue at position 65 (Ser65) is a Phosphoserine. The residue at position 297 (Lys297) is an N6-acetyllysine; alternate. Lys297 is covalently cross-linked (Glycyl lysine isopeptide (Lys-Gly) (interchain with G-Cter in SUMO1); alternate). Residue Lys297 forms a Glycyl lysine isopeptide (Lys-Gly) (interchain with G-Cter in SUMO2); alternate linkage. 2 positions are modified to phosphoserine: Ser306 and Ser346. Residues 341 to 362 (EGIENSWGHLEDSEKEDEDEGG) form a disordered region. Residues 353–362 (SEKEDEDEGG) are compositionally biased toward acidic residues. Ser393 and Ser395 each carry phosphoserine. The interval 404-440 (EPDKNPKKIRTQTISATQVKAPSKKPVKKRKKKRAAN) is disordered. Residues 425 to 440 (PSKKPVKKRKKKRAAN) show a composition bias toward basic residues.

The protein belongs to the RNase PH family. As to quaternary structure, component of the RNA exosome core complex (Exo-9), composed of EXOSC1, EXOSC2, EXOSC3, EXOSC4, EXOSC5, EXOSC6, EXOSC7, EXOSC8 and EXOSC9; within the complex interacts with EXOSC3, EXOSC4, EXOSC5 and DIS3. The catalytically inactive RNA exosome core complex (Exo-9) associates with the catalytic subunit EXOSC10/RRP6. Exo-9 may associate with DIS3 to form the nucleolar exosome complex, or DIS3L to form the cytoplasmic exosome complex. Exo-9 is formed by a hexameric base ring consisting of the heterodimers EXOSC4-EXOSC9, EXOSC5-EXOSC8 and EXOSC6-EXOSC7, and a cap ring consisting of EXOSC1, EXOSC2 and EXOSC3. The RNA exosome complex associates with cofactors C1D/RRP47, MPHOSPH6/MPP6 and MTREX/MTR4. Interacts (via C-terminus region) with SETX (via N-terminus domain); the interaction enhances SETX sumoylation. Interacts with DIS3; the interaction is direct.

It is found in the cytoplasm. Its subcellular location is the nucleus. The protein resides in the nucleolus. The protein localises to the nucleoplasm. In terms of biological role, non-catalytic component of the RNA exosome complex which has 3'-&gt;5' exoribonuclease activity and participates in a multitude of cellular RNA processing and degradation events. In the nucleus, the RNA exosome complex is involved in proper maturation of stable RNA species such as rRNA, snRNA and snoRNA, in the elimination of RNA processing by-products and non-coding 'pervasive' transcripts, such as antisense RNA species and promoter-upstream transcripts (PROMPTs), and of mRNAs with processing defects, thereby limiting or excluding their export to the cytoplasm. The RNA exosome may be involved in Ig class switch recombination (CSR) and/or Ig variable region somatic hypermutation (SHM) by targeting AICDA deamination activity to transcribed dsDNA substrates. In the cytoplasm, the RNA exosome complex is involved in general mRNA turnover and specifically degrades inherently unstable mRNAs containing AU-rich elements (AREs) within their 3' untranslated regions, and in RNA surveillance pathways, preventing translation of aberrant mRNAs. It seems to be involved in degradation of histone mRNA. The catalytic inactive RNA exosome core complex of 9 subunits (Exo-9) is proposed to play a pivotal role in the binding and presentation of RNA for ribonucleolysis, and to serve as a scaffold for the association with catalytic subunits and accessory proteins or complexes. EXOSC9 binds to ARE-containing RNAs. This chain is Exosome complex component RRP45 (EXOSC9), found in Bos taurus (Bovine).